A 1819-amino-acid polypeptide reads, in one-letter code: Non-reducing polyketide synthase nscA (1819 aa).

Residues 25–277 (RRLDQHSKDR…PLPVYDGLCH (253 aa)) are N-terminal acylcarrier protein transacylase domain (SAT). Positions 413-846 (SSKLAIVGMA…GGNTTLLLED (434 aa)) constitute a Ketosynthase family 3 (KS3) domain. Active-site for beta-ketoacyl synthase activity residues include Cys-586, His-721, and His-764. The interval 952–1249 (FTSQGAYYHG…MIPSAPAMSS (298 aa)) is malonyl-CoA:ACP transacylase (MAT) domain. Residues 1339–1658 (TSLVHQITAE…RLLMDRFFSP (320 aa)) form a product template (PT) domain region. An N-terminal hotdog fold region spans residues 1343–1479 (HQITAETVEA…AMIRFEDPMA (137 aa)). The PKS/mFAS DH domain maps to 1343-1653 (HQITAETVEA…IRRVPRLLMD (311 aa)). His-1375 (proton acceptor; for dehydratase activity) is an active-site residue. Positions 1507-1653 (ASRLSKPLAY…IRRVPRLLMD (147 aa)) are C-terminal hotdog fold. The active-site Proton donor; for dehydratase activity is the Asp-1564. A disordered region spans residues 1703–1742 (SSTMASKAPEPAPLLATSSESSTPKESPIVTPAESEREDP). A compositionally biased stretch (low complexity) spans 1719–1730 (TSSESSTPKESP). In terms of domain architecture, Carrier spans 1742-1819 (PVDNNMISQC…EMTAWIEEYC (78 aa)). Ser-1779 carries the O-(pantetheine 4'-phosphoryl)serine modification.

Pantetheine 4'-phosphate serves as cofactor.

Its pathway is secondary metabolite biosynthesis. Functionally, non-reducing polyketide synthase; part of the gene cluster that mediates the biosynthesis of neosartoricin B, a prenylated anthracenone that probably exhibits T-cell antiproliferative activity, suggestive of a physiological role as an immunosuppressive agent. The non-reducing polyketide synthase nscA probably synthesizes and cyclizes the decaketide backbone. The hydrolase nscB then mediates the product release through hydrolysis followed by spontaneous decarboxylation. The prenyltransferase nscD catalyzes the addition of the dimethylallyl group to the aromatic C5. The FAD-dependent monooxygenase nscC is then responsible for the stereospecific hydroxylation at C2. Neosartoricin B can be converted into two additional compounds neosartoricins C and D. Neosartoricin C is a spirocyclic compound that is cyclized through the attack of C3 hydroxyl on C14, followed by dehydration. On the other hand, neosartoricin D is a further cyclized compound in which attack of C2 on C14 in neosartoricin C results in the formation of the acetal-containing dioxabicyclo-octanone ring. Both of these compounds are novel and possibly represent related metabolites of the gene cluster. The polypeptide is Non-reducing polyketide synthase nscA (Trichophyton verrucosum (strain HKI 0517)).